Consider the following 527-residue polypeptide: Peptide chain release factor 3 (527 aa).

The tr-type G domain maps to 11–278 (AKRRTFAIIS…GFVEWAPAPL (268 aa)). GTP contacts are provided by residues 20–27 (SHPDAGKT), 87–91 (DTPGH), and 141–144 (NKMD).

It belongs to the TRAFAC class translation factor GTPase superfamily. Classic translation factor GTPase family. PrfC subfamily.

The protein localises to the cytoplasm. Increases the formation of ribosomal termination complexes and stimulates activities of RF-1 and RF-2. It binds guanine nucleotides and has strong preference for UGA stop codons. It may interact directly with the ribosome. The stimulation of RF-1 and RF-2 is significantly reduced by GTP and GDP, but not by GMP. The chain is Peptide chain release factor 3 from Teredinibacter turnerae (strain ATCC 39867 / T7901).